Reading from the N-terminus, the 229-residue chain is PKHD-type hydroxylase RPA3479 (229 aa).

A Fe2OG dioxygenase domain is found at 78–180 (QIFPPLFNRY…RVASFFWLQS (103 aa)). Residues His98, Asp100, and His161 each coordinate Fe cation. Arg171 is a binding site for 2-oxoglutarate.

It depends on Fe(2+) as a cofactor. Requires L-ascorbate as cofactor.

The chain is PKHD-type hydroxylase RPA3479 from Rhodopseudomonas palustris (strain ATCC BAA-98 / CGA009).